We begin with the raw amino-acid sequence, 428 residues long: Adenylosuccinate synthetase (428 aa).

Residues 12-18 (GDEGKGK) and 40-42 (GHT) contribute to the GTP site. The Proton acceptor role is filled by Asp13. Asp13 and Gly40 together coordinate Mg(2+). Residues 13–16 (DEGK), 38–41 (NAGH), Thr128, Arg142, Gln222, Thr237, and Arg301 contribute to the IMP site. The Proton donor role is filled by His41. Residue 297-303 (TVTGRSR) participates in substrate binding. GTP contacts are provided by residues Arg303, 329-331 (KLD), and 411-413 (STS).

It belongs to the adenylosuccinate synthetase family. In terms of assembly, homodimer. It depends on Mg(2+) as a cofactor.

The protein localises to the cytoplasm. It catalyses the reaction IMP + L-aspartate + GTP = N(6)-(1,2-dicarboxyethyl)-AMP + GDP + phosphate + 2 H(+). It participates in purine metabolism; AMP biosynthesis via de novo pathway; AMP from IMP: step 1/2. Plays an important role in the de novo pathway of purine nucleotide biosynthesis. Catalyzes the first committed step in the biosynthesis of AMP from IMP. This is Adenylosuccinate synthetase from Phenylobacterium zucineum (strain HLK1).